Reading from the N-terminus, the 37-residue chain is Large ribosomal subunit protein bL36c (37 aa).

Belongs to the bacterial ribosomal protein bL36 family.

The protein localises to the plastid. It localises to the chloroplast. In Gracilaria tenuistipitata var. liui (Red alga), this protein is Large ribosomal subunit protein bL36c.